Reading from the N-terminus, the 89-residue chain is MSITLERKAALIAEHARSTGDTGSAEVQVAILSERIANLTEHFKTHKKDNHSRRGLLKLVSQRRRLLDHLKKSDAARYQSLIEKLGLRR.

Belongs to the universal ribosomal protein uS15 family. As to quaternary structure, part of the 30S ribosomal subunit. Forms a bridge to the 50S subunit in the 70S ribosome, contacting the 23S rRNA.

In terms of biological role, one of the primary rRNA binding proteins, it binds directly to 16S rRNA where it helps nucleate assembly of the platform of the 30S subunit by binding and bridging several RNA helices of the 16S rRNA. Forms an intersubunit bridge (bridge B4) with the 23S rRNA of the 50S subunit in the ribosome. The chain is Small ribosomal subunit protein uS15 from Caulobacter vibrioides (strain NA1000 / CB15N) (Caulobacter crescentus).